The following is a 75-amino-acid chain: Small ribosomal subunit protein bS18 (75 aa).

Belongs to the bacterial ribosomal protein bS18 family. Part of the 30S ribosomal subunit. Forms a tight heterodimer with protein bS6.

Its function is as follows. Binds as a heterodimer with protein bS6 to the central domain of the 16S rRNA, where it helps stabilize the platform of the 30S subunit. The sequence is that of Small ribosomal subunit protein bS18 from Alteromonas mediterranea (strain DSM 17117 / CIP 110805 / LMG 28347 / Deep ecotype).